A 420-amino-acid polypeptide reads, in one-letter code: MVEQDPFEIAVKQLERAAQHMKISEEALEFLKRPQRIVEVTIPVEMDDGSVKVFTGFRVQYNWARGPTKGGIRWHPEETLSTVKALAAWMTWKTAVMDLPYGGGKGGIIVDPKKLSDREKERLARGYIRAVYDIISPYEDIPAPDVYTNPQIMAWMMDEYETIARRKTPAFGIITGKPLSIGGSLGRNEATARGASYTIREAAKVLGWDGLKGKTIAIQGYGNAGYYLAKIMSEDYGMKVVAVSDSKGGIYNPDGLNADEVLKWKREHGSVKDFPGATNISNEELLELDVDVLAPAAIEEVITKKNADNIKAKIVAEVANGPVTPEADEILFEKGILQIPDFLCNAGGVTVSYFEWVQNITGYYWTLEEVRERLDKKMTKAFYDVYNTAKEKNIHMRDAAYVVAVQRVYQAMLDRGWVKH.

The active site involves K105. 220 to 226 (GYGNAGY) lines the NAD(+) pocket.

Belongs to the Glu/Leu/Phe/Val dehydrogenases family. In terms of assembly, homohexamer.

It localises to the cytoplasm. It catalyses the reaction L-glutamate + NAD(+) + H2O = 2-oxoglutarate + NH4(+) + NADH + H(+). The catalysed reaction is L-glutamate + NADP(+) + H2O = 2-oxoglutarate + NH4(+) + NADPH + H(+). The sequence is that of Glutamate dehydrogenase (gdhA) from Pyrococcus horikoshii (strain ATCC 700860 / DSM 12428 / JCM 9974 / NBRC 100139 / OT-3).